Here is a 1555-residue protein sequence, read N- to C-terminus: UDP-glucose:glycoprotein glucosyltransferase 1 (1555 aa).

The first 42 residues, 1–42, serve as a signal peptide directing secretion; the sequence is MGCKGDASGACAAGALPVTGVCYKMGVLVVLTVLWLFSSVKA. N-linked (GlcNAc...) asparagine glycosylation is found at Asn536 and Asn1228. Residues 1244 to 1555 are glucosyltransferase; the sequence is KTEEVKQDKD…REGPQKREEL (312 aa). Ser1277 bears the Phosphoserine mark. Residues 1534 to 1555 form a disordered region; it reads GALYKEKTKEPSREGPQKREEL. The short motif at 1552-1555 is the Prevents secretion from ER element; the sequence is REEL.

Belongs to the glycosyltransferase 8 family. In terms of assembly, monomer as well as in a tight complex with SELENOF. Interacts with METTL23. Part of a large chaperone multiprotein complex comprising DNAJB11, HSP90B1, HSPA5, HYOU, PDIA2, PDIA4, PDIA6, PPIB, SDF2L1, UGGT1 and very small amounts of ERP29, but not, or at very low levels, CALR nor CANX. Requires Ca(2+) as cofactor. The cofactor is Mn(2+). Higher levels in pancreas, skeletal muscle, kidney, and brain. Low levels in lung and heart.

It is found in the endoplasmic reticulum lumen. Its subcellular location is the endoplasmic reticulum-Golgi intermediate compartment. It carries out the reaction N(4)-(alpha-D-Man-(1-&gt;2)-alpha-D-Man-(1-&gt;2)-alpha-D-Man-(1-&gt;3)-[alpha-D-Man-(1-&gt;2)-alpha-D-Man-(1-&gt;3)-[alpha-D-Man-(1-&gt;2)-alpha-D-Man-(1-&gt;6)]-alpha-D-Man-(1-&gt;6)]-beta-D-Man-(1-&gt;4)-beta-D-GlcNAc-(1-&gt;4)-beta-D-GlcNAc)-L-asparaginyl-[protein] (N-glucan mannose isomer 9A1,2,3B1,2,3) + UDP-alpha-D-glucose = N(4)-(alpha-D-Glc-(1-&gt;3)-alpha-D-Man-(1-&gt;2)-alpha-D-Man-(1-&gt;2)-alpha-D-Man-(1-&gt;3)-[alpha-D-Man-(1-&gt;2)-alpha-D-Man-(1-&gt;3)-[alpha-D-Man-(1-&gt;2)-alpha-D-Man-(1-&gt;6)]-alpha-D-Man-(1-&gt;6)]-beta-D-Man-(1-&gt;4)-beta-D-GlcNAc-(1-&gt;4)-beta-D-GlcNAc)-L-asparaginyl-[protein] + UDP + H(+). The protein operates within protein modification; protein glycosylation. Its activity is regulated as follows. Catalytic activity is enhanced by complex formation with SELENOF. Functionally, recognizes glycoproteins with minor folding defects. Reglucosylates single N-glycans near the misfolded part of the protein, thus providing quality control for protein folding in the endoplasmic reticulum. Reglucosylated proteins are recognized by calreticulin for recycling to the endoplasmic reticulum and refolding or degradation. This Homo sapiens (Human) protein is UDP-glucose:glycoprotein glucosyltransferase 1 (UGGT1).